Consider the following 785-residue polypeptide: MAGTPAPNSHRKQSGGLEPFPGLSRSIENPPSKRARSFSETTVPDPEDPFGEHAEFTADDLEELDILASQALSQCPVAPRNLSSAHKVRRLDGLPNSPIRKSREDIPVKDNFELEVLQIQYKELKEKLKAMEEEILIKNGEIKILRDSLRQTESVLEEQKRSHFLLEQEKTQALSEKEKEFSRKLQSLQSELQFKDAEMNELRTKSQSNGRTNKPAAPSVSHVSPRKGSSVVLKSEACSPHVGKTTFPTKESFSANTPLFHPCQTEAGHRFLVGQEVSDNKNHSLGGSLMKQDVQQRILADGWMQRKDAQGSILINLLLKQPLVPGSSLGLCHLLSSCPEVPTGTLLQPPGLSTLPGTSGLRTISSSDGPFSPSALREAQNLAFTGLNLVARTESSHDGDMAGRRVFPLHQLPGAVHLLPLVQFFVGLHCQALQDLAPAKKSGVPGDSATHTSCMSSGVEASPEDSIHGLESFSVASLSVLQNLVCHSGAVVCLLLSGMGTEAAAREGNLVQTCADTTSASREDAHDQDQHPLLKMLLQLMASSSAASGHFQASVLGLCLKVLVKLAENASSDLLPRFSCVFPVLPQCLGSALPLPCVLLAVELLSVLLDHDSLAWQLCSHPEGCLLLRLYMYITSRPDRTASETQWLQLEQEVVWLLAKLSVQSPAPAGIGSDCHCNVEAVRALTVMLHRQWLTVRRAGGPRTHQQKQTIRCLRDTVLLLHSLSQKDKLFTVHCVEVLHQYDQVMPGVSMLIRALPDVTDCEEAALDDLCAAETDLEDSEMDCN.

Positions 1–53 (MAGTPAPNSHRKQSGGLEPFPGLSRSIENPPSKRARSFSETTVPDPEDPFGEH) are disordered. Positions 108–209 (VKDNFELEVL…NELRTKSQSN (102 aa)) form a coiled coil. The interval 118–156 (QIQYKELKEKLKAMEEEILIKNGEIKILRDSLRQTESVL) is interaction with CINP. A disordered region spans residues 201-227 (ELRTKSQSNGRTNKPAAPSVSHVSPRK). Positions 763–770 (EEAALDDL) match the EEXXXDL motif motif.

It belongs to the ATRIP family. In terms of assembly, heterodimer with ATR. The heterodimer binds the RPA complex and is then recruited to single-stranded DNA. Interacts with CINP. Interacts with ATR. In terms of processing, phosphorylated by ATR.

It is found in the nucleus. Functionally, required for checkpoint signaling after DNA damage. Required for ATR expression, possibly by stabilizing the protein. The chain is ATR-interacting protein (Atrip) from Mus musculus (Mouse).